Here is a 551-residue protein sequence, read N- to C-terminus: Periplasmic [NiFe] hydrogenase large subunit (551 aa).

Ni(2+) contacts are provided by C65, C68, C530, and C533. Residues 537-551 (VIDPESNQVHKFRIL) constitute a propeptide that is removed on maturation.

Belongs to the [NiFe]/[NiFeSe] hydrogenase large subunit family. Heterodimer of a large and a small subunit. Requires Ni(2+) as cofactor.

It is found in the periplasm. It carries out the reaction 2 Fe(III)-[cytochrome c3] + H2 = 2 Fe(II)-[cytochrome c3] + 2 H(+). The chain is Periplasmic [NiFe] hydrogenase large subunit (hydB) from Megalodesulfovibrio gigas (Desulfovibrio gigas).